Reading from the N-terminus, the 238-residue chain is Small ribosomal subunit protein uS2 (238 aa).

This sequence belongs to the universal ribosomal protein uS2 family.

In Synechococcus sp. (strain CC9605), this protein is Small ribosomal subunit protein uS2.